The chain runs to 189 residues: UPF0312 protein VC0395_0473/VC395_A0785 (189 aa).

The N-terminal stretch at 1 to 22 (MKKTLMAVGLAAVISIPFAANA) is a signal peptide.

The protein belongs to the UPF0312 family. Type 1 subfamily.

Its subcellular location is the periplasm. This chain is UPF0312 protein VC0395_0473/VC395_A0785, found in Vibrio cholerae serotype O1 (strain ATCC 39541 / Classical Ogawa 395 / O395).